We begin with the raw amino-acid sequence, 540 residues long: Phenylalanine--tRNA ligase beta subunit (540 aa).

In terms of domain architecture, B5 spans 268–342 (LRHTSVPFSL…MAYGYDRFTL (75 aa)). Residues aspartate 320, aspartate 326, glutamate 329, and aspartate 330 each contribute to the Mg(2+) site.

Belongs to the phenylalanyl-tRNA synthetase beta subunit family. Type 2 subfamily. In terms of assembly, tetramer of two alpha and two beta subunits. Requires Mg(2+) as cofactor.

The protein resides in the cytoplasm. The catalysed reaction is tRNA(Phe) + L-phenylalanine + ATP = L-phenylalanyl-tRNA(Phe) + AMP + diphosphate + H(+). This Metallosphaera sedula (strain ATCC 51363 / DSM 5348 / JCM 9185 / NBRC 15509 / TH2) protein is Phenylalanine--tRNA ligase beta subunit.